The sequence spans 199 residues: Probable nicotinate-nucleotide adenylyltransferase (199 aa).

The protein belongs to the NadD family.

It catalyses the reaction nicotinate beta-D-ribonucleotide + ATP + H(+) = deamido-NAD(+) + diphosphate. Its pathway is cofactor biosynthesis; NAD(+) biosynthesis; deamido-NAD(+) from nicotinate D-ribonucleotide: step 1/1. Catalyzes the reversible adenylation of nicotinate mononucleotide (NaMN) to nicotinic acid adenine dinucleotide (NaAD). The polypeptide is Probable nicotinate-nucleotide adenylyltransferase (Corynebacterium jeikeium (strain K411)).